Reading from the N-terminus, the 242-residue chain is DNA repair protein RecO (242 aa).

Belongs to the RecO family. In terms of assembly, monomer.

In terms of biological role, involved in DNA repair and RecF pathway recombination. In Shigella boydii serotype 18 (strain CDC 3083-94 / BS512), this protein is DNA repair protein RecO.